We begin with the raw amino-acid sequence, 105 residues long: Cell division protein FtsB (105 aa).

Residues 1-3 (MGK) are Cytoplasmic-facing. A helical transmembrane segment spans residues 4-21 (LTLLLLVLLGWLQYSLWL). The Periplasmic segment spans residues 22–105 (GKNGVHDLVR…PAAPATQDNQ (84 aa)). Residues 28–62 (DLVRVESDVAAQQSNNAQLKARNDQLFAEIDDLNG) adopt a coiled-coil conformation.

It belongs to the FtsB family. As to quaternary structure, part of a complex composed of FtsB, FtsL and FtsQ.

It localises to the cell inner membrane. In terms of biological role, essential cell division protein. May link together the upstream cell division proteins, which are predominantly cytoplasmic, with the downstream cell division proteins, which are predominantly periplasmic. The polypeptide is Cell division protein FtsB (Sodalis glossinidius (strain morsitans)).